A 704-amino-acid polypeptide reads, in one-letter code: DNA ligase (704 aa).

Residues 43–47, 92–93, and E124 each bind NAD(+); these read DADYD and SL. The N6-AMP-lysine intermediate role is filled by K126. NAD(+) is bound by residues R147, E182, K298, and K322. Zn(2+) contacts are provided by C427, C430, C445, and C451. The BRCT domain maps to 625-704; sequence PVASPVAGKI…DGWLRLIGDA (80 aa).

The protein belongs to the NAD-dependent DNA ligase family. LigA subfamily. Requires Mg(2+) as cofactor. The cofactor is Mn(2+).

The enzyme catalyses NAD(+) + (deoxyribonucleotide)n-3'-hydroxyl + 5'-phospho-(deoxyribonucleotide)m = (deoxyribonucleotide)n+m + AMP + beta-nicotinamide D-nucleotide.. Functionally, DNA ligase that catalyzes the formation of phosphodiester linkages between 5'-phosphoryl and 3'-hydroxyl groups in double-stranded DNA using NAD as a coenzyme and as the energy source for the reaction. It is essential for DNA replication and repair of damaged DNA. This is DNA ligase from Cereibacter sphaeroides (strain ATCC 17029 / ATH 2.4.9) (Rhodobacter sphaeroides).